Here is a 642-residue protein sequence, read N- to C-terminus: MSVIDKTSSAVNPLREKVTTACAKKLYNDKDCIKIADFITPLVEDMNLDSNVDRKLHNKLERYELRLNKEYLSEFEKINNIVQKFDELCVKMNSTCTNLSKQMETVKFKSVDLVQKTASLKEKKASIESRCNMINEFLENYSLSSEELRELDECEQSGHLSEFFFKVLERCHEIRENCRNMVQEQGHLAAFEVMEKMQKIDERSHAIICNNLKREFQNLTVDSHQKKQILSKAFKIISQNDAVFQLAIDQYISSRSQELLNQFVEINKMAVQMPEGLAEPLKAVGDMLTSIHELTEQEKQLFSSICSAENLPIVLDECLKSLTSPFKIRVEQLLSTEKNAITIFKMGNILIFYANKFETLIRKDSYFTIMLADLVKTVRQVCIAGINHHVDGLMRKMTSPHYDLLPVPEVRQCLSLYHGLISIAVKTGDLNLLLEPERIYEYVLEPLIQTVQLSATRLKSDIEVSVFTINCLTVIRSAISEISAFKKKIEMIDAMIEGNSDVLVSVQVSEMLEKSGILELYQKFNAVNPAEKKPLSTLPGLESTTVGEAIVMFTQYLHNHASSDHTYDIDQQILASEERQRIRERNTLEFLKVYKMIVDRLGNPTNGYENLHYLPIEHVESVLKFEKEKENTPSSNESESLA.

It belongs to the COG6 family. As to quaternary structure, component of the conserved oligomeric Golgi complex which is composed of eight different subunits and is required for normal Golgi morphology and localization.

Its subcellular location is the golgi apparatus membrane. Functionally, required for normal Golgi function. This Caenorhabditis elegans protein is Conserved oligomeric Golgi complex subunit 6 (cogc-6).